The following is an 81-amino-acid chain: Large ribosomal subunit protein bL27m (81 aa).

Residues 1 to 11 (MATKKSGGSSR) are compositionally biased toward polar residues. The segment at 1–20 (MATKKSGGSSRNGRDSKGRR) is disordered.

This sequence belongs to the bacterial ribosomal protein bL27 family.

Its subcellular location is the mitochondrion. This chain is Large ribosomal subunit protein bL27m (RPL27), found in Reclinomonas americana.